Reading from the N-terminus, the 553-residue chain is MAKLLSFSNESRESLERGMNALADAVRVTIGPRGRNVVLEKSYGSPDIVNDGDTIAKEIELADPFENIGAKLIQQVASKTKDKAGDGTTTATVLAQAMVEEGLRNTAAGASPIELRRGMEKAVAAVVASLNQRSQSVSGDAIRQVATVSSGGDEEVGRMVAEAMDRVSFDGVITVEESKSLATELEVTEGMAFDRGYSSPYFVTDGDRQICEFENALLLLTDRKISSVTDLVPVLETVQKSGSPLVILAEEVDGEALATLVVNKNRGVLQVAAVRAPSFGERRKAALADIAVLTGGQVISEDRAMTLDKVTMEDLGRARRITISKDSTTIVASDDSKEAVSARVASIKRELDNTDSEYDQEKLNERIAKLAGGVAVIKVGAPTETELKNRKLRIEDALNATRAAVEEGIVAGGGSTLLHISAELDALTSGLEGDQKTGVEIVQRALSAPLRQIAENAGSNGDVVVDRVRNSGEGFNALTGNFEDLMNAGILDASKVVRLALQDAVSIASLVVTTEVVVADKPEPPAPAGGGGDPMGGMGGMDPMGGMGGMGMM.

Residues 29–32, 86–90, Gly-413, 476–478, and Asp-492 each bind ATP; these read TIGP, DGTTT, and NAL. The segment at 520 to 543 is disordered; that stretch reads DKPEPPAPAGGGGDPMGGMGGMDP. Residues 528 to 543 show a composition bias toward gly residues; it reads AGGGGDPMGGMGGMDP.

It belongs to the chaperonin (HSP60) family. In terms of assembly, forms a cylinder of 14 subunits composed of two heptameric rings stacked back-to-back. Interacts with the co-chaperonin GroES.

Its subcellular location is the cytoplasm. The catalysed reaction is ATP + H2O + a folded polypeptide = ADP + phosphate + an unfolded polypeptide.. Together with its co-chaperonin GroES, plays an essential role in assisting protein folding. The GroEL-GroES system forms a nano-cage that allows encapsulation of the non-native substrate proteins and provides a physical environment optimized to promote and accelerate protein folding. This chain is Chaperonin GroEL 1, found in Synechococcus sp. (strain CC9311).